Consider the following 449-residue polypeptide: Ribulose bisphosphate carboxylase large chain (449 aa).

Lysine 7 carries the post-translational modification N6,N6,N6-trimethyllysine. Asparagine 116 and threonine 166 together coordinate substrate. The active-site Proton acceptor is lysine 168. Lysine 170 serves as a coordination point for substrate. Positions 194, 196, and 197 each coordinate Mg(2+). At lysine 194 the chain carries N6-carboxylysine. Histidine 287 acts as the Proton acceptor in catalysis. Arginine 288, histidine 320, and serine 372 together coordinate substrate.

It belongs to the RuBisCO large chain family. Type I subfamily. In terms of assembly, heterohexadecamer of 8 large chains and 8 small chains; disulfide-linked. The disulfide link is formed within the large subunit homodimers. Requires Mg(2+) as cofactor. The disulfide bond which can form in the large chain dimeric partners within the hexadecamer appears to be associated with oxidative stress and protein turnover.

It is found in the plastid. The protein localises to the chloroplast. It catalyses the reaction 2 (2R)-3-phosphoglycerate + 2 H(+) = D-ribulose 1,5-bisphosphate + CO2 + H2O. The enzyme catalyses D-ribulose 1,5-bisphosphate + O2 = 2-phosphoglycolate + (2R)-3-phosphoglycerate + 2 H(+). In terms of biological role, ruBisCO catalyzes two reactions: the carboxylation of D-ribulose 1,5-bisphosphate, the primary event in carbon dioxide fixation, as well as the oxidative fragmentation of the pentose substrate in the photorespiration process. Both reactions occur simultaneously and in competition at the same active site. This is Ribulose bisphosphate carboxylase large chain from Aspidistra elatior (Cast-iron plant).